The sequence spans 403 residues: Acetate kinase (403 aa).

N9 lines the Mg(2+) pocket. K16 contributes to the ATP binding site. R93 is a binding site for substrate. The Proton donor/acceptor role is filled by D150. ATP is bound by residues 210-214 (HLGNG), 284-286 (DFR), and 332-336 (GVGEN). A Mg(2+)-binding site is contributed by E388.

The protein belongs to the acetokinase family. Homodimer. Mg(2+) serves as cofactor. Mn(2+) is required as a cofactor.

The protein resides in the cytoplasm. It catalyses the reaction acetate + ATP = acetyl phosphate + ADP. Its pathway is metabolic intermediate biosynthesis; acetyl-CoA biosynthesis; acetyl-CoA from acetate: step 1/2. Its function is as follows. Catalyzes the formation of acetyl phosphate from acetate and ATP. Can also catalyze the reverse reaction. The sequence is that of Acetate kinase from Corynebacterium jeikeium (strain K411).